The primary structure comprises 214 residues: Fibroblast growth factor 8 (214 aa).

Positions 1–22 are cleaved as a signal peptide; that stretch reads MDPCSSLFSYVFMHLFVLCLQA. N-linked (GlcNAc...) asparagine glycans are attached at residues asparagine 31, asparagine 137, and asparagine 207.

It belongs to the heparin-binding growth factors family.

The protein localises to the secreted. Plays an important role in the regulation of embryonic development, cell proliferation, cell differentiation and cell migration. Involved in initiation, outgrowth and patterning of the limbs. The protein is Fibroblast growth factor 8 (FGF8) of Gallus gallus (Chicken).